The sequence spans 273 residues: NADPH-dependent 7-cyano-7-deazaguanine reductase (273 aa).

Position 81–83 (81–83 (VES)) interacts with substrate. 83–84 (SK) is an NADPH binding site. Cys179 serves as the catalytic Thioimide intermediate. Asp186 (proton donor) is an active-site residue. 218-219 (AE) is a substrate binding site. NADPH is bound at residue 247–248 (RG).

The protein belongs to the GTP cyclohydrolase I family. QueF type 2 subfamily. In terms of assembly, homodimer.

It localises to the cytoplasm. It carries out the reaction 7-aminomethyl-7-carbaguanine + 2 NADP(+) = 7-cyano-7-deazaguanine + 2 NADPH + 3 H(+). The protein operates within tRNA modification; tRNA-queuosine biosynthesis. Functionally, catalyzes the NADPH-dependent reduction of 7-cyano-7-deazaguanine (preQ0) to 7-aminomethyl-7-deazaguanine (preQ1). The sequence is that of NADPH-dependent 7-cyano-7-deazaguanine reductase from Rickettsia massiliae (strain Mtu5).